Here is a 206-residue protein sequence, read N- to C-terminus: High frequency lysogenization protein HflD homolog (206 aa).

It belongs to the HflD family.

It localises to the cytoplasm. The protein localises to the cell inner membrane. The polypeptide is High frequency lysogenization protein HflD homolog (Ectopseudomonas mendocina (strain ymp) (Pseudomonas mendocina)).